We begin with the raw amino-acid sequence, 376 residues long: Gibberellin 20 oxidase 4 (376 aa).

A Fe2OG dioxygenase domain is found at 222 to 322; that stretch reads DNESIFRLNY…RKTLAFFLCP (101 aa). The Fe cation site is built by His-247, Asp-249, and His-303. Arg-313 is a catalytic residue.

The protein belongs to the iron/ascorbate-dependent oxidoreductase family. GA20OX subfamily. The cofactor is Fe(2+). Requires L-ascorbate as cofactor. Expressed in roots. Detected in leaves, inflorescences and siliques, but not in stems and dry seeds.

It catalyses the reaction gibberellin A12 + 2 2-oxoglutarate + 3 O2 + H(+) = gibberellin A9 + 2 succinate + 3 CO2 + 2 H2O. The enzyme catalyses gibberellin A53 + 2 2-oxoglutarate + 3 O2 + H(+) = gibberellin A20 + 2 succinate + 3 CO2 + 2 H2O. It participates in plant hormone biosynthesis; gibberellin biosynthesis. In terms of biological role, key oxidase enzyme in the biosynthesis of gibberellin that catalyzes the conversion of GA12 and GA53 to GA9 and GA20 respectively, via a three-step oxidation at C-20 of the GA skeleton. This is Gibberellin 20 oxidase 4 (GA20OX4) from Arabidopsis thaliana (Mouse-ear cress).